Consider the following 436-residue polypeptide: 3-phosphoshikimate 1-carboxyvinyltransferase (436 aa).

3-phosphoshikimate-binding residues include Lys-22, Ser-23, and Arg-27. Residue Lys-22 coordinates phosphoenolpyruvate. Residues Gly-95 and Arg-123 each contribute to the phosphoenolpyruvate site. 3-phosphoshikimate contacts are provided by Ser-170, Ser-171, Gln-172, Ser-201, Asp-322, and Lys-349. A phosphoenolpyruvate-binding site is contributed by Gln-172. Asp-322 (proton acceptor) is an active-site residue. Residues Arg-353, Arg-397, and Lys-422 each coordinate phosphoenolpyruvate.

This sequence belongs to the EPSP synthase family. As to quaternary structure, monomer.

Its subcellular location is the cytoplasm. The catalysed reaction is 3-phosphoshikimate + phosphoenolpyruvate = 5-O-(1-carboxyvinyl)-3-phosphoshikimate + phosphate. It participates in metabolic intermediate biosynthesis; chorismate biosynthesis; chorismate from D-erythrose 4-phosphate and phosphoenolpyruvate: step 6/7. Catalyzes the transfer of the enolpyruvyl moiety of phosphoenolpyruvate (PEP) to the 5-hydroxyl of shikimate-3-phosphate (S3P) to produce enolpyruvyl shikimate-3-phosphate and inorganic phosphate. This Ralstonia nicotianae (strain ATCC BAA-1114 / GMI1000) (Ralstonia solanacearum) protein is 3-phosphoshikimate 1-carboxyvinyltransferase.